We begin with the raw amino-acid sequence, 357 residues long: Protein-arginine kinase (357 aa).

The region spanning 24-256 (VIISSRVRLA…LQLVTQERAA (233 aa)) is the Phosphagen kinase C-terminal domain. Residues 27–31 (SSRVR), His-93, Arg-127, 178–182 (RASVM), and 209–214 (RGLYGE) contribute to the ATP site. The RDXXRA motif of the pArg binding pocket involved in allosteric regulation signature appears at 339-344 (RDIFRA).

Belongs to the ATP:guanido phosphotransferase family.

The enzyme catalyses L-arginyl-[protein] + ATP = N(omega)-phospho-L-arginyl-[protein] + ADP + H(+). With respect to regulation, appears to be allosterically activated by the binding of pArg-containing polypeptides to the pArg-binding pocket localized in the C-terminal domain of McsB. Its function is as follows. Catalyzes the specific phosphorylation of arginine residues in proteins. This chain is Protein-arginine kinase, found in Desulforamulus reducens (strain ATCC BAA-1160 / DSM 100696 / MI-1) (Desulfotomaculum reducens).